A 277-amino-acid polypeptide reads, in one-letter code: Ribonuclease HII (277 aa).

In terms of domain architecture, RNase H type-2 spans 72–260 (EYIAGIDEAG…IKEMIEMKKE (189 aa)). The a divalent metal cation site is built by Asp78, Glu79, and Asp170.

It belongs to the RNase HII family. It depends on Mn(2+) as a cofactor. Mg(2+) serves as cofactor.

It localises to the cytoplasm. It catalyses the reaction Endonucleolytic cleavage to 5'-phosphomonoester.. Its function is as follows. Endonuclease that specifically degrades the RNA of RNA-DNA hybrids. The protein is Ribonuclease HII of Geobacillus sp. (strain WCH70).